A 340-amino-acid chain; its full sequence is Adenosine deaminase (340 aa).

2 residues coordinate Zn(2+): H15 and H17. The substrate site is built by H17, D19, and G172. Zn(2+) is bound at residue H199. E202 serves as the catalytic Proton donor. D279 is a binding site for Zn(2+).

Belongs to the metallo-dependent hydrolases superfamily. Adenosine and AMP deaminases family. Adenosine deaminase subfamily. Zn(2+) is required as a cofactor.

The catalysed reaction is adenosine + H2O + H(+) = inosine + NH4(+). It carries out the reaction 2'-deoxyadenosine + H2O + H(+) = 2'-deoxyinosine + NH4(+). Its function is as follows. Catalyzes the hydrolytic deamination of adenosine and 2-deoxyadenosine. The protein is Adenosine deaminase of Streptococcus agalactiae serotype Ia (strain ATCC 27591 / A909 / CDC SS700).